The primary structure comprises 31 residues: Cytochrome b6-f complex subunit 6 (31 aa).

The chain crosses the membrane as a helical span at residues Ile-3–Leu-23.

The protein belongs to the PetL family. As to quaternary structure, the 4 large subunits of the cytochrome b6-f complex are cytochrome b6, subunit IV (17 kDa polypeptide, PetD), cytochrome f and the Rieske protein, while the 4 small subunits are PetG, PetL, PetM and PetN. The complex functions as a dimer.

It localises to the plastid. It is found in the chloroplast thylakoid membrane. Component of the cytochrome b6-f complex, which mediates electron transfer between photosystem II (PSII) and photosystem I (PSI), cyclic electron flow around PSI, and state transitions. PetL is important for photoautotrophic growth as well as for electron transfer efficiency and stability of the cytochrome b6-f complex. The chain is Cytochrome b6-f complex subunit 6 from Trieres chinensis (Marine centric diatom).